Reading from the N-terminus, the 281-residue chain is Succinate dehydrogenase [ubiquinone] iron-sulfur subunit 1, mitochondrial (281 aa).

Residues methionine 1–leucine 25 constitute a mitochondrion transit peptide. Residues valine 26–threonine 48 form a disordered region. The 93-residue stretch at lysine 49–methionine 141 folds into the 2Fe-2S ferredoxin-type domain. Positions 102, 107, and 122 each coordinate [2Fe-2S] cluster. Residues aspartate 184–tyrosine 214 enclose the 4Fe-4S ferredoxin-type domain. Positions 194, 197, and 200 each coordinate [4Fe-4S] cluster. Cysteine 204 is a binding site for [3Fe-4S] cluster. Position 209 (tryptophan 209) interacts with a ubiquinone. Positions 251 and 257 each coordinate [3Fe-4S] cluster. Cysteine 261 lines the [4Fe-4S] cluster pocket.

The protein belongs to the succinate dehydrogenase/fumarate reductase iron-sulfur protein family. As to quaternary structure, component of complex II composed of eight subunits in plants: four classical SDH subunits SDH1, SDH2, SDH3 and SDH4 (a flavoprotein (FP), an iron-sulfur protein (IP), and a cytochrome b composed of a large and a small subunit.), as well as four subunits unknown in mitochondria from bacteria and heterotrophic eukaryotes. [2Fe-2S] cluster serves as cofactor. Requires [3Fe-4S] cluster as cofactor. [4Fe-4S] cluster is required as a cofactor.

Its subcellular location is the mitochondrion inner membrane. It catalyses the reaction a quinone + succinate = fumarate + a quinol. It functions in the pathway carbohydrate metabolism; tricarboxylic acid cycle; fumarate from succinate (eukaryal route): step 1/1. Functionally, iron-sulfur protein (IP) subunit of succinate dehydrogenase (SDH) that is involved in complex II of the mitochondrial electron transport chain and is responsible for transferring electrons from succinate to ubiquinone (coenzyme Q). The chain is Succinate dehydrogenase [ubiquinone] iron-sulfur subunit 1, mitochondrial from Oryza sativa subsp. japonica (Rice).